A 1744-amino-acid polypeptide reads, in one-letter code: Myotubularin-related protein 5 (1744 aa).

Positions 14–150 constitute a uDENN domain; sequence DTVAVIVLEE…IRFLTYELVE (137 aa). Residues 165 to 304 form the cDENN domain; the sequence is ELGFELIPIS…YYNSLHQRLR (140 aa). One can recognise a dDENN domain in the interval 306–412; sequence VMFTTTSQED…LTRALPRRKH (107 aa). In terms of domain architecture, GRAM spans 787–871; it reads KGNFDPVLAH…LYSMESFKKL (85 aa). Residues 996 to 1447 enclose the Myotubularin phosphatase domain; it reads NAHIRYAVID…PQIHMWPFLA (452 aa). Polar residues predominate over residues 1102–1116; it reads TGSMTGSQQTLHSKA. The disordered stretch occupies residues 1102–1123; it reads TGSMTGSQQTLHSKASSNEESS. The Phorbol-ester/DAG-type zinc finger occupies 1540 to 1590; the sequence is IHELTPFTVGARPVQCCYCTNILTRWSKAVHCKKCRIHVHEGCVNRNITIG. A PH domain is found at 1643-1743; the sequence is PPLCTGYLSK…WKECIEQVIR (101 aa).

The protein belongs to the protein-tyrosine phosphatase family. Non-receptor class myotubularin subfamily.

Functionally, probably acts as an adapter for other myotubularin-like phosphatases. This chain is Myotubularin-related protein 5, found in Caenorhabditis elegans.